Here is a 253-residue protein sequence, read N- to C-terminus: MDDSSLQKVELQTDVYMVCLQHALSTENFEVMGLLIGNFACGIAKISAVIILRRLDKKKDRVEISSEQLLKAAAEAERLTVELNRPMRVLGWYHSHPHITVCPSHVDVRTQATYQTMDHSFVGLIFSVFSEGKESKEHEIFLNCFQSDNGEATEIPLEIVHTPDISDRCLRTMTDLSKILVQEEEDMAEACKDHPDVLASIHNNAVRTRALIHITDIITKPLVQTFEKRIALNKLRATHLQRQLQELQKMCNG.

The MPN domain maps to 9–145; sequence VELQTDVYMV…KEHEIFLNCF (137 aa). The Zn(2+) site is built by H94, H96, and D107. Residues 94–107 carry the JAMM motif motif; sequence HSHPHITVCPSHVD. A coiled-coil region spans residues 227 to 249; the sequence is EKRIALNKLRATHLQRQLQELQK.

This sequence belongs to the peptidase M67A family. BRCC36 subfamily. As to quaternary structure, component of the BRISC complex, at least composed of ABRAXAS2, BRCC3/BRCC36, BABAM2 and BABAM1/NBA1. Within the complex, interacts directly with ABRAXAS2. The heterodimer with ABRAXAS2 assembles into a heterotetramer. The BRISC complex binds polyubiquitin. Requires Zn(2+) as cofactor.

It is found in the cytoplasm. The protein localises to the nucleus. The protein resides in the cytoskeleton. It localises to the spindle pole. Metalloprotease that specifically cleaves 'Lys-63'-linked polyubiquitin chains, leaving the last ubiquitin chain attached to its substrates. Catalytic subunit of the BRISC complex; does not have activity by itself, but needs to be associated into a heterotetramer with ABRAXAS2 for minimal in vitro activity. Plays a role in regulating the onset of apoptosis via its role in modulating 'Lys-63'-linked ubiquitination of target proteins. Required for normal mitotic spindle assembly and microtubule attachment to kinetochores via its role in deubiquitinating spindle assembly factors. The chain is Lys-63-specific deubiquitinase BRCC36 from Camponotus floridanus (Florida carpenter ant).